The chain runs to 359 residues: Alanine racemase (359 aa).

The Proton acceptor; specific for D-alanine role is filled by lysine 34. N6-(pyridoxal phosphate)lysine is present on lysine 34. Arginine 129 provides a ligand contact to substrate. The active-site Proton acceptor; specific for L-alanine is the tyrosine 254. Methionine 302 provides a ligand contact to substrate.

This sequence belongs to the alanine racemase family. Pyridoxal 5'-phosphate serves as cofactor.

It carries out the reaction L-alanine = D-alanine. The protein operates within amino-acid biosynthesis; D-alanine biosynthesis; D-alanine from L-alanine: step 1/1. Catalyzes the interconversion of L-alanine and D-alanine. May also act on other amino acids. This is Alanine racemase (alr) from Yersinia pestis.